The chain runs to 414 residues: Serine/threonine transporter SstT (414 aa).

Residues 2–15 (TTQRSPGLFRRLAH) are Cytoplasmic-facing. A helical transmembrane segment spans residues 16–36 (GSLVKQILVGLVLGILLAWIS). The Periplasmic segment spans residues 37 to 45 (KPAAEAVGL). A helical transmembrane segment spans residues 46–66 (LGTLFVGALKAVAPILVLMLV). The Cytoplasmic portion of the chain corresponds to 67 to 83 (MASIANHQHGQKTNILP). The chain crosses the membrane as a helical span at residues 84-104 (ILFLYLLGTFSAALAAVVFSF). The Periplasmic segment spans residues 105-142 (AFPSTLHLSSSAGDISPPSGIVEVMRGLVMSMVSNPID). Residues 143-163 (ALLKGNYIGILVWAIGLGFAL) form a helical membrane-spanning segment. Topologically, residues 164–179 (RHGNETTKNLVNDMSN) are cytoplasmic. Residues 180-200 (AVTFMVKLVIRFAPIGIFGLV) form a helical membrane-spanning segment. The Periplasmic portion of the chain corresponds to 201–217 (SSTLATTGFSTLWGYAQ). Residues 218 to 238 (LLVVLVGCMLLVALVVNPLLV) form a helical membrane-spanning segment. The Cytoplasmic segment spans residues 239–299 (WWKIRRNPFP…VSIPLGATIN (61 aa)). The chain crosses the membrane as a helical span at residues 300–320 (MAGAAITITVLTLAAVNTLGI). Residues 321-331 (PVDLPTALLLS) are Periplasmic-facing. A helical transmembrane segment spans residues 332-352 (VVASLCACGASGVAGGSLLLI). At 353-414 (PLACNMFGIS…DRLANSALRN (62 aa)) the chain is on the cytoplasmic side.

Belongs to the dicarboxylate/amino acid:cation symporter (DAACS) (TC 2.A.23) family.

The protein resides in the cell inner membrane. The catalysed reaction is L-serine(in) + Na(+)(in) = L-serine(out) + Na(+)(out). The enzyme catalyses L-threonine(in) + Na(+)(in) = L-threonine(out) + Na(+)(out). In terms of biological role, involved in the import of serine and threonine into the cell, with the concomitant import of sodium (symport system). This Shigella dysenteriae serotype 1 (strain Sd197) protein is Serine/threonine transporter SstT.